The primary structure comprises 426 residues: 3-phosphoshikimate 1-carboxyvinyltransferase (426 aa).

Positions 22, 23, and 27 each coordinate 3-phosphoshikimate. Lysine 22 contacts phosphoenolpyruvate. The phosphoenolpyruvate site is built by glycine 96 and arginine 124. Residues serine 170, serine 171, glutamine 172, serine 198, aspartate 314, asparagine 337, and lysine 341 each coordinate 3-phosphoshikimate. Glutamine 172 contributes to the phosphoenolpyruvate binding site. Aspartate 314 serves as the catalytic Proton acceptor. Arginine 345, arginine 387, and lysine 412 together coordinate phosphoenolpyruvate.

It belongs to the EPSP synthase family. Monomer.

Its subcellular location is the cytoplasm. It carries out the reaction 3-phosphoshikimate + phosphoenolpyruvate = 5-O-(1-carboxyvinyl)-3-phosphoshikimate + phosphate. It participates in metabolic intermediate biosynthesis; chorismate biosynthesis; chorismate from D-erythrose 4-phosphate and phosphoenolpyruvate: step 6/7. In terms of biological role, catalyzes the transfer of the enolpyruvyl moiety of phosphoenolpyruvate (PEP) to the 5-hydroxyl of shikimate-3-phosphate (S3P) to produce enolpyruvyl shikimate-3-phosphate and inorganic phosphate. The sequence is that of 3-phosphoshikimate 1-carboxyvinyltransferase from Shewanella baltica (strain OS155 / ATCC BAA-1091).